Consider the following 233-residue polypeptide: MADS-box transcription factor 56 (233 aa).

One can recognise an MADS-box domain in the interval 1–61 (MVRGRTELKR…GRLYEFASAP (61 aa)). A K-box domain is found at 87–177 (IQQVKDDTLG…RGKHRNLEAA (91 aa)).

Its subcellular location is the nucleus. Its function is as follows. Probable transcription factor. This chain is MADS-box transcription factor 56 (MADS56), found in Oryza sativa subsp. japonica (Rice).